The following is a 115-amino-acid chain: Large ribosomal subunit protein bL19 (115 aa).

It belongs to the bacterial ribosomal protein bL19 family.

Functionally, this protein is located at the 30S-50S ribosomal subunit interface and may play a role in the structure and function of the aminoacyl-tRNA binding site. This is Large ribosomal subunit protein bL19 from Francisella tularensis subsp. tularensis (strain WY96-3418).